The following is a 284-amino-acid chain: Small ribosomal subunit protein uS2 (284 aa).

It belongs to the universal ribosomal protein uS2 family.

The protein is Small ribosomal subunit protein uS2 (rpsB) of Mycoplasma genitalium (strain ATCC 33530 / DSM 19775 / NCTC 10195 / G37) (Mycoplasmoides genitalium).